A 640-amino-acid chain; its full sequence is Threonine--tRNA ligase (640 aa).

Residues 1 to 61 (MPIITLPDGS…DHDATLQIIT (61 aa)) form the TGS domain. Residues 242–533 (DHRKLGKRLD…LIEHYEGAFP (292 aa)) are catalytic. Cys-333, His-384, and His-510 together coordinate Zn(2+).

It belongs to the class-II aminoacyl-tRNA synthetase family. Homodimer. Zn(2+) is required as a cofactor.

It localises to the cytoplasm. It catalyses the reaction tRNA(Thr) + L-threonine + ATP = L-threonyl-tRNA(Thr) + AMP + diphosphate + H(+). Catalyzes the attachment of threonine to tRNA(Thr) in a two-step reaction: L-threonine is first activated by ATP to form Thr-AMP and then transferred to the acceptor end of tRNA(Thr). Also edits incorrectly charged L-seryl-tRNA(Thr). The sequence is that of Threonine--tRNA ligase from Azotobacter vinelandii (strain DJ / ATCC BAA-1303).